The sequence spans 348 residues: Protein RecA (348 aa).

Residue 64–71 (GPESSGKT) participates in ATP binding. Basic and acidic residues predominate over residues 326 to 335 (EIDGTNKEPL). Residues 326–348 (EIDGTNKEPLDENEETLSLLDDE) form a disordered region. Over residues 336 to 348 (DENEETLSLLDDE) the composition is skewed to acidic residues.

Belongs to the RecA family.

It localises to the cytoplasm. Its function is as follows. Can catalyze the hydrolysis of ATP in the presence of single-stranded DNA, the ATP-dependent uptake of single-stranded DNA by duplex DNA, and the ATP-dependent hybridization of homologous single-stranded DNAs. It interacts with LexA causing its activation and leading to its autocatalytic cleavage. The sequence is that of Protein RecA from Listeria innocua serovar 6a (strain ATCC BAA-680 / CLIP 11262).